The primary structure comprises 109 residues: Large ribosomal subunit protein uL22 (109 aa).

The protein belongs to the universal ribosomal protein uL22 family. As to quaternary structure, part of the 50S ribosomal subunit.

Functionally, this protein binds specifically to 23S rRNA; its binding is stimulated by other ribosomal proteins, e.g. L4, L17, and L20. It is important during the early stages of 50S assembly. It makes multiple contacts with different domains of the 23S rRNA in the assembled 50S subunit and ribosome. The globular domain of the protein is located near the polypeptide exit tunnel on the outside of the subunit, while an extended beta-hairpin is found that lines the wall of the exit tunnel in the center of the 70S ribosome. In Cupriavidus taiwanensis (strain DSM 17343 / BCRC 17206 / CCUG 44338 / CIP 107171 / LMG 19424 / R1) (Ralstonia taiwanensis (strain LMG 19424)), this protein is Large ribosomal subunit protein uL22.